The sequence spans 339 residues: Tryptophan--tRNA ligase (339 aa).

ATP-binding positions include 11-13 and 19-20; these read QPT and GN. The 'HIGH' region signature appears at 12-20; that stretch reads PTGAIHIGN. Residue Asp135 participates in L-tryptophan binding. ATP is bound by residues 147–149, Ile191, and 200–204; these read GED and KMSKS. The 'KMSKS' region signature appears at 200–204; the sequence is KMSKS.

This sequence belongs to the class-I aminoacyl-tRNA synthetase family. As to quaternary structure, homodimer.

Its subcellular location is the cytoplasm. It catalyses the reaction tRNA(Trp) + L-tryptophan + ATP = L-tryptophyl-tRNA(Trp) + AMP + diphosphate + H(+). In terms of biological role, catalyzes the attachment of tryptophan to tRNA(Trp). In Prochlorococcus marinus (strain SARG / CCMP1375 / SS120), this protein is Tryptophan--tRNA ligase.